Consider the following 943-residue polypeptide: Isoleucine--tRNA ligase (943 aa).

The short motif at P58–H68 is the 'HIGH' region element. Residue E567 coordinates L-isoleucyl-5'-AMP. A 'KMSKS' region motif is present at residues K608–S612. K611 serves as a coordination point for ATP. Residues C906, C909, C926, and C929 each coordinate Zn(2+).

The protein belongs to the class-I aminoacyl-tRNA synthetase family. IleS type 1 subfamily. In terms of assembly, monomer. The cofactor is Zn(2+).

The protein localises to the cytoplasm. It catalyses the reaction tRNA(Ile) + L-isoleucine + ATP = L-isoleucyl-tRNA(Ile) + AMP + diphosphate. Catalyzes the attachment of isoleucine to tRNA(Ile). As IleRS can inadvertently accommodate and process structurally similar amino acids such as valine, to avoid such errors it has two additional distinct tRNA(Ile)-dependent editing activities. One activity is designated as 'pretransfer' editing and involves the hydrolysis of activated Val-AMP. The other activity is designated 'posttransfer' editing and involves deacylation of mischarged Val-tRNA(Ile). The sequence is that of Isoleucine--tRNA ligase from Pseudomonas aeruginosa (strain ATCC 15692 / DSM 22644 / CIP 104116 / JCM 14847 / LMG 12228 / 1C / PRS 101 / PAO1).